Consider the following 196-residue polypeptide: Holliday junction branch migration complex subunit RuvA (196 aa).

Residues 1 to 63 (MINKIYGKVI…ENELKLFGFL (63 aa)) are domain I. The interval 64–139 (NSDERETFKS…KLLINNELES (76 aa)) is domain II. S139 is a region of interest (flexible linker). The interval 139-196 (SSLFRFKELEESIVSMGFDRKIVNSKLKEAFNLVEFSNLKDSEKEQFLFKEVLKRMSN) is domain III.

It belongs to the RuvA family. In terms of assembly, homotetramer. Forms an RuvA(8)-RuvB(12)-Holliday junction (HJ) complex. HJ DNA is sandwiched between 2 RuvA tetramers; dsDNA enters through RuvA and exits via RuvB. An RuvB hexamer assembles on each DNA strand where it exits the tetramer. Each RuvB hexamer is contacted by two RuvA subunits (via domain III) on 2 adjacent RuvB subunits; this complex drives branch migration. In the full resolvosome a probable DNA-RuvA(4)-RuvB(12)-RuvC(2) complex forms which resolves the HJ.

It localises to the cytoplasm. Functionally, the RuvA-RuvB-RuvC complex processes Holliday junction (HJ) DNA during genetic recombination and DNA repair, while the RuvA-RuvB complex plays an important role in the rescue of blocked DNA replication forks via replication fork reversal (RFR). RuvA specifically binds to HJ cruciform DNA, conferring on it an open structure. The RuvB hexamer acts as an ATP-dependent pump, pulling dsDNA into and through the RuvAB complex. HJ branch migration allows RuvC to scan DNA until it finds its consensus sequence, where it cleaves and resolves the cruciform DNA. In Borreliella afzelii (strain PKo) (Borrelia afzelii), this protein is Holliday junction branch migration complex subunit RuvA.